Consider the following 119-residue polypeptide: Large ribosomal subunit protein bL20c (119 aa).

It belongs to the bacterial ribosomal protein bL20 family.

Its subcellular location is the plastid. The protein localises to the chloroplast. Its function is as follows. Binds directly to 23S ribosomal RNA and is necessary for the in vitro assembly process of the 50S ribosomal subunit. It is not involved in the protein synthesizing functions of that subunit. This is Large ribosomal subunit protein bL20c from Amborella trichopoda.